Reading from the N-terminus, the 253-residue chain is 5'/3'-nucleotidase SurE (253 aa).

Residues aspartate 8, aspartate 9, serine 39, and asparagine 92 each contribute to the a divalent metal cation site.

The protein belongs to the SurE nucleotidase family. The cofactor is a divalent metal cation.

It localises to the cytoplasm. The catalysed reaction is a ribonucleoside 5'-phosphate + H2O = a ribonucleoside + phosphate. It catalyses the reaction a ribonucleoside 3'-phosphate + H2O = a ribonucleoside + phosphate. The enzyme catalyses [phosphate](n) + H2O = [phosphate](n-1) + phosphate + H(+). In terms of biological role, nucleotidase with a broad substrate specificity as it can dephosphorylate various ribo- and deoxyribonucleoside 5'-monophosphates and ribonucleoside 3'-monophosphates with highest affinity to 3'-AMP. Also hydrolyzes polyphosphate (exopolyphosphatase activity) with the preference for short-chain-length substrates (P20-25). Might be involved in the regulation of dNTP and NTP pools, and in the turnover of 3'-mononucleotides produced by numerous intracellular RNases (T1, T2, and F) during the degradation of various RNAs. In Citrobacter koseri (strain ATCC BAA-895 / CDC 4225-83 / SGSC4696), this protein is 5'/3'-nucleotidase SurE.